Here is a 152-residue protein sequence, read N- to C-terminus: Large-conductance mechanosensitive channel (152 aa).

The next 3 helical transmembrane spans lie at 14 to 34 (VVDM…VKSL), 39 to 59 (LMPG…FLVI), and 85 to 105 (GLFI…FLVI).

Belongs to the MscL family. In terms of assembly, homopentamer.

It is found in the cell inner membrane. Its function is as follows. Channel that opens in response to stretch forces in the membrane lipid bilayer. May participate in the regulation of osmotic pressure changes within the cell. This chain is Large-conductance mechanosensitive channel, found in Syntrophus aciditrophicus (strain SB).